The following is a 340-amino-acid chain: MSQTKPVYASFRSIGAYVPSKILSNADLEKMVDTTDEWIVKRTGIKERHIAADDEYTSDMGAKAAKLAIERAGIEKEDIDLVLCATVTPDYFNMPSTACIISDKLGIRNVQAFDISAACSGFVYLLTVAKAFIESGMKKNVLIIGAEKFSSVVDYTDRSTCILFGDGAGAAIISATDKKEEGFIDVHASADGSYADFLVTPAPGAINPASQKVIDEGLNFVQMKGNETFKLAVKTLTKDVKEILAKNKIDSGDIPHFIPHQANYRIIKAVGDALKMREDQVVLTVGKYGNTSAASIPMAINEIWESGRLKTGDLMLLDTFGGGLTWASALLPFAGESVQR.

Active-site residues include Cys119 and His260. The ACP-binding stretch occupies residues 261-265; the sequence is QANYR. The active site involves Asn290.

This sequence belongs to the thiolase-like superfamily. FabH family. Homodimer.

Its subcellular location is the cytoplasm. It carries out the reaction malonyl-[ACP] + acetyl-CoA + H(+) = 3-oxobutanoyl-[ACP] + CO2 + CoA. The protein operates within lipid metabolism; fatty acid biosynthesis. Functionally, catalyzes the condensation reaction of fatty acid synthesis by the addition to an acyl acceptor of two carbons from malonyl-ACP. Catalyzes the first condensation reaction which initiates fatty acid synthesis and may therefore play a role in governing the total rate of fatty acid production. Possesses both acetoacetyl-ACP synthase and acetyl transacylase activities. Its substrate specificity determines the biosynthesis of branched-chain and/or straight-chain of fatty acids. This is Beta-ketoacyl-[acyl-carrier-protein] synthase III from Sulfurovum sp. (strain NBC37-1).